The following is a 213-amino-acid chain: MSTIVKICGLTTADTLEAAVETGADMVGFVFFPASPRHLDIDFADALGRQVRSRAAKVALTVDADDDLLDAIVEQLRPNWLQFHGSESPERVRSIKRIYGLPVMKAIAVAGPEDLSVLPDYAAVADRILFDARPPKDATRPGGLGAAFDWKLLDGVNLKLPFLVSGGINAGNVAEALRVTRAQGVDVSSGVETSPGEKDPDLIRDFIRAARAA.

Belongs to the TrpF family.

It catalyses the reaction N-(5-phospho-beta-D-ribosyl)anthranilate = 1-(2-carboxyphenylamino)-1-deoxy-D-ribulose 5-phosphate. The protein operates within amino-acid biosynthesis; L-tryptophan biosynthesis; L-tryptophan from chorismate: step 3/5. This Rhodopseudomonas palustris (strain TIE-1) protein is N-(5'-phosphoribosyl)anthranilate isomerase.